The chain runs to 442 residues: Chromosomal replication initiator protein DnaA (442 aa).

The tract at residues 1–75 (MDAWPRCLER…GNGEVALAVG (75 aa)) is domain I, interacts with DnaA modulators. The tract at residues 75 to 104 (GSRPRAPEPLPAPQAVASAPAAAPIVPFAG) is domain II. The segment at 105–322 (NLDSHYTFAN…GALNTLVARA (218 aa)) is domain III, AAA+ region. Residues Gly-150, Gly-152, Lys-153, and Thr-154 each coordinate ATP. The interval 323–442 (NFTGRSITVE…WEKLIRKLSE (120 aa)) is domain IV, binds dsDNA.

Belongs to the DnaA family. Oligomerizes as a right-handed, spiral filament on DNA at oriC.

It localises to the cytoplasm. Plays an essential role in the initiation and regulation of chromosomal replication. ATP-DnaA binds to the origin of replication (oriC) to initiate formation of the DNA replication initiation complex once per cell cycle. Binds the DnaA box (a 9 base pair repeat at the origin) and separates the double-stranded (ds)DNA. Forms a right-handed helical filament on oriC DNA; dsDNA binds to the exterior of the filament while single-stranded (ss)DNA is stabiized in the filament's interior. The ATP-DnaA-oriC complex binds and stabilizes one strand of the AT-rich DNA unwinding element (DUE), permitting loading of DNA polymerase. After initiation quickly degrades to an ADP-DnaA complex that is not apt for DNA replication. Binds acidic phospholipids. The polypeptide is Chromosomal replication initiator protein DnaA (Xanthomonas campestris pv. campestris (strain 8004)).